A 67-amino-acid chain; its full sequence is Large ribosomal subunit protein bL32 (67 aa).

The segment covering 1–20 (MAVPKRKMSRSNTRARRAKW) has biased composition (basic residues). Residues 1–24 (MAVPKRKMSRSNTRARRAKWKATA) form a disordered region.

This sequence belongs to the bacterial ribosomal protein bL32 family.

The protein is Large ribosomal subunit protein bL32 of Renibacterium salmoninarum (strain ATCC 33209 / DSM 20767 / JCM 11484 / NBRC 15589 / NCIMB 2235).